The sequence spans 61 residues: Large ribosomal subunit protein bL32 (61 aa).

Residues 1–16 (MPTPKKKTSRSKRDMR) are compositionally biased toward basic residues. The segment at 1–47 (MPTPKKKTSRSKRDMRRSHDGLTAPAIAVEKKTGELVRPHRAHKGAD) is disordered. Basic and acidic residues predominate over residues 29–38 (VEKKTGELVR).

The protein belongs to the bacterial ribosomal protein bL32 family.

The chain is Large ribosomal subunit protein bL32 from Bdellovibrio bacteriovorus (strain ATCC 15356 / DSM 50701 / NCIMB 9529 / HD100).